A 293-amino-acid polypeptide reads, in one-letter code: Protease HtpX (293 aa).

2 helical membrane passes run 4-24 (IALFLLTNLAVMVVFGLVLSL) and 34-54 (GLLIMALLFGFGGSFISLLMS). Zn(2+) is bound at residue H139. The active site involves E140. H143 serves as a coordination point for Zn(2+). The next 2 membrane-spanning stretches (helical) occupy residues 158–178 (VVNTFVIFISRILAQIAAGFM) and 193–213 (LIYFAVAMVLELVFGILASII). E222 contributes to the Zn(2+) binding site.

This sequence belongs to the peptidase M48B family. The cofactor is Zn(2+).

It localises to the cell inner membrane. This chain is Protease HtpX, found in Enterobacter sp. (strain 638).